Here is a 349-residue protein sequence, read N- to C-terminus: NADH-quinone oxidoreductase subunit H (349 aa).

The next 8 helical transmembrane spans lie at 16–36, 88–108, 123–143, 157–177, 202–222, 264–284, 285–305, and 325–345; these read WPVVWTLLKIVAIVAPLMGCV, GLFIVGPILALAPSLVAWAVV, LLFLLAVTSMEVYGVIVAGWA, AAQMVSYEVSMGFALICVLLI, FLSWNWLPLLPMFVVYLISGI, ILVSILTSVLFLGGWLSPVGF, LPDGFHWLALKTASILFIFLW, and VFIPVTLVWVVVVAVWLMSPL.

This sequence belongs to the complex I subunit 1 family. NDH-1 is composed of 14 different subunits. Subunits NuoA, H, J, K, L, M, N constitute the membrane sector of the complex.

Its subcellular location is the cell inner membrane. It carries out the reaction a quinone + NADH + 5 H(+)(in) = a quinol + NAD(+) + 4 H(+)(out). NDH-1 shuttles electrons from NADH, via FMN and iron-sulfur (Fe-S) centers, to quinones in the respiratory chain. The immediate electron acceptor for the enzyme in this species is believed to be ubiquinone. Couples the redox reaction to proton translocation (for every two electrons transferred, four hydrogen ions are translocated across the cytoplasmic membrane), and thus conserves the redox energy in a proton gradient. This subunit may bind ubiquinone. This chain is NADH-quinone oxidoreductase subunit H, found in Azoarcus sp. (strain BH72).